The following is a 143-amino-acid chain: Large ribosomal subunit protein uL16 (143 aa).

This sequence belongs to the universal ribosomal protein uL16 family. As to quaternary structure, part of the 50S ribosomal subunit.

In terms of biological role, binds 23S rRNA and is also seen to make contacts with the A and possibly P site tRNAs. The chain is Large ribosomal subunit protein uL16 from Tropheryma whipplei (strain TW08/27) (Whipple's bacillus).